Here is a 358-residue protein sequence, read N- to C-terminus: Neutral protease 2 homolog PABG_02362 (358 aa).

An N-terminal signal peptide occupies residues 1–19 (MRRVSGILAVAAFTISAFA). A propeptide spanning residues 20–182 (GVIQPVAKDA…FAAMNQFVKI (163 aa)) is cleaved from the precursor. 2 disulfides stabilise this stretch: cysteine 188–cysteine 259 and cysteine 266–cysteine 284. Asparagine 249 carries N-linked (GlcNAc...) asparagine glycosylation. Zn(2+) is bound at residue histidine 309. Residue glutamate 310 is part of the active site. Residues histidine 313 and aspartate 324 each coordinate Zn(2+).

The protein belongs to the peptidase M35 family. The cofactor is Zn(2+).

The protein localises to the secreted. The enzyme catalyses Preferential cleavage of bonds with hydrophobic residues in P1'. Also 3-Asn-|-Gln-4 and 8-Gly-|-Ser-9 bonds in insulin B chain.. Secreted metalloproteinase that allows assimilation of proteinaceous substrates. Shows high activities on basic nuclear substrates such as histone and protamine. The protein is Neutral protease 2 homolog PABG_02362 of Paracoccidioides brasiliensis (strain Pb03).